Here is a 1322-residue protein sequence, read N- to C-terminus: C-Jun-amino-terminal kinase-interacting protein 3 (1322 aa).

In terms of domain architecture, RH1 spans 12-100; sequence VVVYQDDYCS…LTQYEREKAL (89 aa). Residues 50–80 are kinesin-binding domain (KBD); essential for its function in axon elongation; it reads EVVKELMPLVVNVLENLDSVLSENQEHEVEL. Residues 66-167 are a coiled coil; the sequence is LDSVLSENQE…KKEYNALHQR (102 aa). Disordered stretches follow at residues 183 to 211 and 245 to 317; these read KMQQVGGGGQTESSLPGRSRKERPTSLNV and SSSY…NSRN. Residues 210–226 form a JNK-binding domain (JBD); essential for its function in axon elongation region; sequence NVFPLADGMVRAQMGGK. The segment covering 261 to 270 has biased composition (low complexity); that stretch reads SSAAATPSTT. 3 positions are modified to phosphothreonine: threonine 266, threonine 276, and threonine 287. The segment covering 271–282 has biased composition (polar residues); the sequence is GTKSNTPTSSVP. The segment covering 305 to 315 has biased composition (basic residues); it reads NNKRAREKRNS. Phosphoserine is present on residues serine 315, serine 365, and serine 366. The segment at 424–459 is leucine zipper-like domain (LZ); essential for its function in axon elongation; sequence QLLETKNALNVVKNDLIAKVDQLSGEQEVLKGELEA. Residues 443-534 adopt a coiled-coil conformation; the sequence is VDQLSGEQEV…KERLMELQEA (92 aa). Residues 459–515 form an interaction with NTRK2 region; the sequence is AAKQAKVKLENRIKELEEELKRVKSEAVTARREPREEVEDDKIPMAQRRRFTRVEMA. The region spanning 506-580 is the RH2 domain; sequence RRRFTRVEMA…SPPPAKRSYP (75 aa). Phosphoserine occurs at positions 588 and 662. Disordered stretches follow at residues 704 to 754, 844 to 952, and 1281 to 1307; these read WKPN…EADA, PRSN…TTSS, and RIGDGEDDETEEGTGDVNQTKPSLSKA. Residues 724–750 are compositionally biased toward basic and acidic residues; that stretch reads LTCDREGEGEPKSTHPSPEKKKAKEVP. Residues 914–937 show a composition bias toward polar residues; sequence APTQSSSTQPASENGSESDGSIVQ. A compositionally biased stretch (low complexity) spans 941–952; the sequence is EPSGESSATTSS. The segment covering 1285 to 1294 has biased composition (acidic residues); it reads GEDDETEEGT.

This sequence belongs to the JIP scaffold family. In terms of assembly, forms homo- or heterooligomeric complexes. The central region of MAPK8IP3 interacts with the C-terminal of MAPK8IP2 but not MAPK8IP1. Binds specific components of the JNK signaling pathway namely MAPK8/JNK1, MAPK9/JNK2 and MAPK10/JNK3 to the N-terminal region, MAP2K4/MKK4 and MAP2K7/MKK7 to the central region and MAP3K11 to the C-terminal region. Binds the TPR motif-containing C-terminal of kinesin light chain, KLC1. Pre-assembled MAPK8IP1 scaffolding complexes are then transported as a cargo of kinesin, to the required subcellular location. Interacts with ROCK1 and this interaction is enhanced by ultraviolet-B (UVB) radiation. Interacts with SH3RF2. Interacts with NTRK3/TRKC. Interacts with NTRK2/TRKB. In terms of processing, phosphorylation by ROCK1 is crucial for the recruitment of JNK.

It localises to the cytoplasm. The protein localises to the golgi apparatus. Its subcellular location is the cytoplasmic vesicle. It is found in the cell projection. The protein resides in the growth cone. It localises to the axon. The protein localises to the dendrite. Its subcellular location is the perinuclear region. The JNK-interacting protein (JIP) group of scaffold proteins selectively mediates JNK signaling by aggregating specific components of the MAPK cascade to form a functional JNK signaling module. May function as a regulator of vesicle transport, through interactions with the JNK-signaling components and motor proteins. Promotes neuronal axon elongation in a kinesin- and JNK-dependent manner. Activates cofilin at axon tips via local activation of JNK, thereby regulating filopodial dynamics and enhancing axon elongation. Its binding to kinesin heavy chains (KHC), promotes kinesin-1 motility along microtubules and is essential for axon elongation and regeneration. Regulates cortical neuronal migration by mediating NTRK2/TRKB anterograde axonal transport during brain development. Acts as an adapter that bridges the interaction between NTRK2/TRKB and KLC1 and drives NTRK2/TRKB axonal but not dendritic anterograde transport, which is essential for subsequent BDNF-triggered signaling and filopodia formation. This chain is C-Jun-amino-terminal kinase-interacting protein 3 (Mapk8ip3), found in Rattus norvegicus (Rat).